Consider the following 131-residue polypeptide: Sperm microtubule inner protein 11 (131 aa).

The interval 18–44 is disordered; the sequence is KKRNTTEETNQKEPEPTRLPPIISKDG. The segment covering 21–33 has biased composition (basic and acidic residues); the sequence is NTTEETNQKEPEP.

In terms of assembly, microtubule inner protein component of sperm flagellar doublet microtubules.

The protein localises to the cytoplasm. Its subcellular location is the cytoskeleton. It is found in the flagellum axoneme. In terms of biological role, microtubule inner protein (MIP) part of the dynein-decorated doublet microtubules (DMTs) in flagellum axoneme. May serve to reinforce and thus stabilize the microtubule structure in the sperm flagella. The polypeptide is Sperm microtubule inner protein 11 (Homo sapiens (Human)).